Consider the following 398-residue polypeptide: MASSSSAAALWTAAPHPHGSCIRIHAIFHQRHQRRGRRPVVVASSVRPLQAASLAVATAPVAVASRRTAAEEAVYEVVLRQAALVEEATHRRGAGAPRWAEEDAVDWGLLLGDAYHRCGEVCAEYAKTFYLGTQLMTPERRKAVWAIYVWCRRTDELVDGPNSSYITPKALDRWEKRLEDLFEGRPYDMYDAALSDTVSKFPVDIQPFKDMIEGMRLDLWKSRYRSFDELYLYCYYVAGTVGLMTVPVMGIAPDSKASTESVYNAALALGIANQLTNILRDVGEDSRRGRIYLPLDELAEAGLTEEDIFRGKVTDKWRKFMKGQILRARLFFDEAEKGVAHLDSASRWPVLASLWLYRQILDAIEANDYNNFTKRAYVNKAKKLLSLPVAYARAAVAS.

Residues 1–80 constitute a chloroplast transit peptide; it reads MASSSSAAAL…EEAVYEVVLR (80 aa).

The protein belongs to the phytoene/squalene synthase family. Expressed in leaves and endosperm. Expressed in developing leaves.

The protein localises to the plastid. Its subcellular location is the chloroplast membrane. The protein resides in the chloroplast. It localises to the plastoglobule. It catalyses the reaction 2 (2E,6E,10E)-geranylgeranyl diphosphate = 15-cis-phytoene + 2 diphosphate. Its function is as follows. Catalyzes the conversion of geranylgeranyl diphosphate to phytoene. Mediates the first committed step in carotenoid biosynthesis. The chain is Phytoene synthase 2, chloroplastic from Oryza sativa subsp. japonica (Rice).